A 107-amino-acid chain; its full sequence is UPF0145 protein Memar_1285 (107 aa).

It belongs to the UPF0145 family.

This Methanoculleus marisnigri (strain ATCC 35101 / DSM 1498 / JR1) protein is UPF0145 protein Memar_1285.